We begin with the raw amino-acid sequence, 565 residues long: NAD-dependent malic enzyme (565 aa).

Tyrosine 104 serves as the catalytic Proton donor. Residue arginine 157 coordinates NAD(+). Lysine 175 functions as the Proton acceptor in the catalytic mechanism. Glutamate 246, aspartate 247, and aspartate 270 together coordinate a divalent metal cation. Aspartate 270 and asparagine 418 together coordinate NAD(+).

Belongs to the malic enzymes family. As to quaternary structure, homotetramer. The cofactor is Mg(2+). It depends on Mn(2+) as a cofactor.

It carries out the reaction (S)-malate + NAD(+) = pyruvate + CO2 + NADH. The enzyme catalyses oxaloacetate + H(+) = pyruvate + CO2. The protein is NAD-dependent malic enzyme of Serratia proteamaculans (strain 568).